The chain runs to 464 residues: ATP synthase subunit beta (464 aa).

ATP is bound at residue 153–160 (GGAGVGKT).

Belongs to the ATPase alpha/beta chains family. As to quaternary structure, F-type ATPases have 2 components, CF(1) - the catalytic core - and CF(0) - the membrane proton channel. CF(1) has five subunits: alpha(3), beta(3), gamma(1), delta(1), epsilon(1). CF(0) has three main subunits: a(1), b(2) and c(9-12). The alpha and beta chains form an alternating ring which encloses part of the gamma chain. CF(1) is attached to CF(0) by a central stalk formed by the gamma and epsilon chains, while a peripheral stalk is formed by the delta and b chains.

It localises to the cell membrane. The catalysed reaction is ATP + H2O + 4 H(+)(in) = ADP + phosphate + 5 H(+)(out). Produces ATP from ADP in the presence of a proton gradient across the membrane. The catalytic sites are hosted primarily by the beta subunits. The chain is ATP synthase subunit beta from Alkaliphilus oremlandii (strain OhILAs) (Clostridium oremlandii (strain OhILAs)).